The primary structure comprises 62 residues: Large ribosomal subunit protein eL24 (62 aa).

Zn(2+)-binding residues include Cys6, Cys9, Cys32, and Cys36. The C4-type zinc finger occupies 6–36 (CYFCGKMLEPGTGKLYVKKDGSTYFMCSSKC).

It belongs to the eukaryotic ribosomal protein eL24 family. Part of the 50S ribosomal subunit. Forms a cluster with proteins L3 and L14. The cofactor is Zn(2+).

Its function is as follows. Binds to the 23S rRNA. This Methanosarcina acetivorans (strain ATCC 35395 / DSM 2834 / JCM 12185 / C2A) protein is Large ribosomal subunit protein eL24.